The following is a 232-amino-acid chain: Ubiquinone biosynthesis O-methyltransferase (232 aa).

Positions 36, 55, 76, and 120 each coordinate S-adenosyl-L-methionine.

It belongs to the methyltransferase superfamily. UbiG/COQ3 family.

The catalysed reaction is a 3-demethylubiquinol + S-adenosyl-L-methionine = a ubiquinol + S-adenosyl-L-homocysteine + H(+). It carries out the reaction a 3-(all-trans-polyprenyl)benzene-1,2-diol + S-adenosyl-L-methionine = a 2-methoxy-6-(all-trans-polyprenyl)phenol + S-adenosyl-L-homocysteine + H(+). Its pathway is cofactor biosynthesis; ubiquinone biosynthesis. Its function is as follows. O-methyltransferase that catalyzes the 2 O-methylation steps in the ubiquinone biosynthetic pathway. This Pseudomonas paraeruginosa (strain DSM 24068 / PA7) (Pseudomonas aeruginosa (strain PA7)) protein is Ubiquinone biosynthesis O-methyltransferase.